The primary structure comprises 215 residues: Orotate phosphoribosyltransferase (215 aa).

Lys-26 is a binding site for 5-phospho-alpha-D-ribose 1-diphosphate. 34 to 35 (FF) is a binding site for orotate. 5-phospho-alpha-D-ribose 1-diphosphate contacts are provided by residues 72-73 (YK), Arg-99, Lys-100, Lys-103, His-105, and 124-132 (DDVITAGTA). Orotate-binding residues include Thr-128 and Arg-156.

Belongs to the purine/pyrimidine phosphoribosyltransferase family. PyrE subfamily. Homodimer. The cofactor is Mg(2+).

It catalyses the reaction orotidine 5'-phosphate + diphosphate = orotate + 5-phospho-alpha-D-ribose 1-diphosphate. It participates in pyrimidine metabolism; UMP biosynthesis via de novo pathway; UMP from orotate: step 1/2. Functionally, catalyzes the transfer of a ribosyl phosphate group from 5-phosphoribose 1-diphosphate to orotate, leading to the formation of orotidine monophosphate (OMP). The protein is Orotate phosphoribosyltransferase of Cellvibrio japonicus (strain Ueda107) (Pseudomonas fluorescens subsp. cellulosa).